A 132-amino-acid polypeptide reads, in one-letter code: D-ribose pyranase (132 aa).

H20 serves as the catalytic Proton donor. Substrate contacts are provided by residues D28, H99, and 121–123; that span reads YSN.

The protein belongs to the RbsD / FucU family. RbsD subfamily. As to quaternary structure, homodecamer.

The protein localises to the cytoplasm. The enzyme catalyses beta-D-ribopyranose = beta-D-ribofuranose. It participates in carbohydrate metabolism; D-ribose degradation; D-ribose 5-phosphate from beta-D-ribopyranose: step 1/2. Functionally, catalyzes the interconversion of beta-pyran and beta-furan forms of D-ribose. The chain is D-ribose pyranase from Streptococcus agalactiae serotype V (strain ATCC BAA-611 / 2603 V/R).